A 62-amino-acid chain; its full sequence is Photosystem II reaction center protein Z (62 aa).

Helical transmembrane passes span 8 to 28 (FLIA…VAYA) and 41 to 61 (YVGS…NFLV).

It belongs to the PsbZ family. PSII is composed of 1 copy each of membrane proteins PsbA, PsbB, PsbC, PsbD, PsbE, PsbF, PsbH, PsbI, PsbJ, PsbK, PsbL, PsbM, PsbT, PsbX, PsbY, PsbZ, Psb30/Ycf12, peripheral proteins PsbO, CyanoQ (PsbQ), PsbU, PsbV and a large number of cofactors. It forms dimeric complexes.

The protein localises to the cellular thylakoid membrane. Its function is as follows. May control the interaction of photosystem II (PSII) cores with the light-harvesting antenna, regulates electron flow through the 2 photosystem reaction centers. PSII is a light-driven water plastoquinone oxidoreductase, using light energy to abstract electrons from H(2)O, generating a proton gradient subsequently used for ATP formation. This chain is Photosystem II reaction center protein Z, found in Microcystis aeruginosa (strain NIES-843 / IAM M-2473).